The chain runs to 246 residues: Salivary antigen SP32 (246 aa).

Positions 1–23 (MSGHILTVGLIVVVAHCATLSSS) are cleaved as a signal peptide. The interval 51–160 (DKFYPDISDD…PDLSKYKNSP (110 aa)) is disordered. The segment covering 65–78 (VVRDNGRKGGDRGR) has biased composition (basic and acidic residues). Over residues 79-124 (QSTPSGKESHPSATQTGGRRPSQSPCGESRPSGSATSGRRPSQSPR) the composition is skewed to polar residues. The segment covering 141–155 (QQDRRQNKKQPDLSK) has biased composition (basic and acidic residues).

In terms of assembly, interacts with human DSG1. Interacts with human DSG3. In terms of tissue distribution, salivary gland (at protein level).

Its subcellular location is the secreted. In terms of biological role, down-regulates the expression of CD86 and HLA-DR on the surface of lipopolysaccharide (LPS)-stimulated human peripheral blood mononuclear cells (PBMCs). Reduces LPS-induced secretion of IL-1beta/IL1B in human PBMCs. Reduces LPS-induced secretion of various cytokines, such as IL-1beta, TNF-alpha/TNF, MCP-1/CCL2, IL6, IL27 and IL-1alpha/IL1A, in host cultured macrophages probably via inhibition of NF-kappa-B signaling pathway. Reduces production of IFN-gamma/IFNG, IL4 and IL6 in human lymphocytes activated with PMA/ionomycin. Exhibits anti-inflammatory activity in carrageenan-induced paw edema model in rats. This is Salivary antigen SP32 from Phlebotomus papatasi (Sandfly).